A 430-amino-acid polypeptide reads, in one-letter code: Serine--tRNA ligase (430 aa).

237–239 serves as a coordination point for L-serine; that stretch reads TAE. Position 268–270 (268–270) interacts with ATP; that stretch reads RSE. Glu291 serves as a coordination point for L-serine. 355 to 358 is a binding site for ATP; sequence EISS. Ser391 lines the L-serine pocket.

It belongs to the class-II aminoacyl-tRNA synthetase family. Type-1 seryl-tRNA synthetase subfamily. Homodimer. The tRNA molecule binds across the dimer.

The protein localises to the cytoplasm. It catalyses the reaction tRNA(Ser) + L-serine + ATP = L-seryl-tRNA(Ser) + AMP + diphosphate + H(+). The enzyme catalyses tRNA(Sec) + L-serine + ATP = L-seryl-tRNA(Sec) + AMP + diphosphate + H(+). It functions in the pathway aminoacyl-tRNA biosynthesis; selenocysteinyl-tRNA(Sec) biosynthesis; L-seryl-tRNA(Sec) from L-serine and tRNA(Sec): step 1/1. Its function is as follows. Catalyzes the attachment of serine to tRNA(Ser). Is also able to aminoacylate tRNA(Sec) with serine, to form the misacylated tRNA L-seryl-tRNA(Sec), which will be further converted into selenocysteinyl-tRNA(Sec). The sequence is that of Serine--tRNA ligase from Enterobacter sp. (strain 638).